The primary structure comprises 335 residues: Tetraacyldisaccharide 4'-kinase (335 aa).

Position 58 to 65 (58 to 65 (TMGGAGKT)) interacts with ATP.

The protein belongs to the LpxK family.

The catalysed reaction is a lipid A disaccharide + ATP = a lipid IVA + ADP + H(+). The protein operates within glycolipid biosynthesis; lipid IV(A) biosynthesis; lipid IV(A) from (3R)-3-hydroxytetradecanoyl-[acyl-carrier-protein] and UDP-N-acetyl-alpha-D-glucosamine: step 6/6. In terms of biological role, transfers the gamma-phosphate of ATP to the 4'-position of a tetraacyldisaccharide 1-phosphate intermediate (termed DS-1-P) to form tetraacyldisaccharide 1,4'-bis-phosphate (lipid IVA). This Caulobacter vibrioides (strain ATCC 19089 / CIP 103742 / CB 15) (Caulobacter crescentus) protein is Tetraacyldisaccharide 4'-kinase.